The chain runs to 465 residues: Lactaldehyde dehydrogenase (465 aa).

220–225 (GSVEVG) serves as a coordination point for NAD(+). Residues E240 and C274 contribute to the active site.

This sequence belongs to the aldehyde dehydrogenase family. As to quaternary structure, homotetramer.

The enzyme catalyses (S)-lactaldehyde + NAD(+) + H2O = (S)-lactate + NADH + 2 H(+). It participates in cofactor biosynthesis; coenzyme F420 biosynthesis. Its function is as follows. Involved in F420 biosynthesis through the oxidation of lactaldehyde to lactate. This is Lactaldehyde dehydrogenase from Methanococcus maripaludis (strain DSM 14266 / JCM 13030 / NBRC 101832 / S2 / LL).